The following is a 428-amino-acid chain: Gamma-glutamyl phosphate reductase (428 aa).

This sequence belongs to the gamma-glutamyl phosphate reductase family.

It is found in the cytoplasm. It catalyses the reaction L-glutamate 5-semialdehyde + phosphate + NADP(+) = L-glutamyl 5-phosphate + NADPH + H(+). Its pathway is amino-acid biosynthesis; L-proline biosynthesis; L-glutamate 5-semialdehyde from L-glutamate: step 2/2. Its function is as follows. Catalyzes the NADPH-dependent reduction of L-glutamate 5-phosphate into L-glutamate 5-semialdehyde and phosphate. The product spontaneously undergoes cyclization to form 1-pyrroline-5-carboxylate. This Mesorhizobium japonicum (strain LMG 29417 / CECT 9101 / MAFF 303099) (Mesorhizobium loti (strain MAFF 303099)) protein is Gamma-glutamyl phosphate reductase.